Consider the following 621-residue polypeptide: Very-long-chain aldehyde decarbonylase GL1-5 (621 aa).

The next 5 membrane-spanning stretches (helical) occupy residues 99–119 (IILS…GQHL), 126–146 (GAGL…YWFH), 186–206 (LLFS…IIAF), 224–244 (FELV…LMYT), and 332–352 (MWPL…SFTV). The 135-residue stretch at 138–272 (VEFLYYWFHR…MPFYDYIYNT (135 aa)) folds into the Fatty acid hydroxylase domain.

It belongs to the sterol desaturase family. As to quaternary structure, homodimer. In terms of tissue distribution, expressed in panicles, developing spikelets, stamens and hulls and, at low levels, in roots, developing seeds, flag leaves and seedling shoots. Strongly expressed in the epidermal cells of anthers.

The protein localises to the endoplasmic reticulum membrane. The enzyme catalyses a long-chain fatty aldehyde + 2 NADPH + O2 + H(+) = a long-chain alkane + formate + 2 NADP(+) + H2O. Its function is as follows. Aldehyde decarbonylase involved in the conversion of aldehydes to alkanes. Core component of a very-long-chain alkane synthesis complex. Required for the biosynthesis of very-long-chain fatty acids (including polyesters) in cuticles, anther tapetum and pollen exine. In Oryza sativa subsp. japonica (Rice), this protein is Very-long-chain aldehyde decarbonylase GL1-5.